Reading from the N-terminus, the 711-residue chain is Toxin RTX-III translocation ATP-binding protein (711 aa).

Positions 1 to 129 (MESQMPFNEK…EIFQGGMILI (129 aa)) constitute a Peptidase C39 domain. H87 is an active-site residue. The 283-residue stretch at 158–440 (FVETIIVSIF…LAQLWQDFQQ (283 aa)) folds into the ABC transmembrane type-1 domain. 5 consecutive transmembrane segments (helical) span residues 162 to 182 (IIVSIFLQLFALITPLFFQVV), 195 to 215 (LNVITVALSVVVIFEIVLSGL), 273 to 293 (ALTSVLDLLFSFIFFAVMWYY), 299 to 319 (IVILLSLPCYIAWSIFISPIL), and 392 to 412 (VMIINLWLGAHLVISGDLSIG). Positions 472–707 (IAFKHIRFRY…ENGLYYYLNQ (236 aa)) constitute an ABC transporter domain. 506-513 (GRSGSGKS) provides a ligand contact to ATP.

It belongs to the ABC transporter superfamily. Protein-1 exporter (TC 3.A.1.109) family. In terms of assembly, homodimer.

It is found in the cell membrane. Involved in the transport of the toxin RTX-III. This is Toxin RTX-III translocation ATP-binding protein (apxIIIB) from Actinobacillus pleuropneumoniae (Haemophilus pleuropneumoniae).